An 84-amino-acid chain; its full sequence is Small ribosomal subunit protein uS17 (84 aa).

Belongs to the universal ribosomal protein uS17 family. As to quaternary structure, part of the 30S ribosomal subunit.

One of the primary rRNA binding proteins, it binds specifically to the 5'-end of 16S ribosomal RNA. The polypeptide is Small ribosomal subunit protein uS17 (Proteus mirabilis (strain HI4320)).